The sequence spans 307 residues: Mycothiol acetyltransferase (307 aa).

N-acetyltransferase domains lie at 15 to 158 (HTLD…LAEP) and 164 to 307 (VTVR…RTES). E46 is a binding site for 1D-myo-inositol 2-(L-cysteinylamino)-2-deoxy-alpha-D-glucopyranoside. 90–92 (LVV) contributes to the acetyl-CoA binding site. 1D-myo-inositol 2-(L-cysteinylamino)-2-deoxy-alpha-D-glucopyranoside contacts are provided by E191, K230, and E239. Acetyl-CoA contacts are provided by residues 243–245 (VGV) and 250–256 (QGGGLGK). Residue Y277 coordinates 1D-myo-inositol 2-(L-cysteinylamino)-2-deoxy-alpha-D-glucopyranoside.

The protein belongs to the acetyltransferase family. MshD subfamily. In terms of assembly, monomer.

The enzyme catalyses 1D-myo-inositol 2-(L-cysteinylamino)-2-deoxy-alpha-D-glucopyranoside + acetyl-CoA = mycothiol + CoA + H(+). Its function is as follows. Catalyzes the transfer of acetyl from acetyl-CoA to desacetylmycothiol (Cys-GlcN-Ins) to form mycothiol. This chain is Mycothiol acetyltransferase, found in Streptomyces griseus subsp. griseus (strain JCM 4626 / CBS 651.72 / NBRC 13350 / KCC S-0626 / ISP 5235).